Reading from the N-terminus, the 335-residue chain is MPKRRDILAIVLIVLPWTLLVTVWHQSTIAPLLTTHKGEPLTDSRREAAPGADPREYCMSDRDIVEVVRTEYVYTRPPPWSDTLPTIHVVTPTYSRPVQKAELTRMANTLLHVPNLHWLVVEDAPRRTPLTARLLRDTGLNYTHLHVETPRNYKLRGDARDPRIPRGTMQRNLALRWLRETFPRNSSQPGVVYFADDDNTYSLELFEEMRSTRRVSVWPVAFVGGLRYEAPRVNGAGKVVGWKTVFDPHRPFAIDMAGFAVNLRLILQRSQAYFKLRGVKGGYQESSLLRELVTLNDLEPKAANCTKILVWHTRTEKPVLVNEGKKGFTDPTVEI.

Over 1 to 6 (MPKRRD) the chain is Cytoplasmic. Residues 3-5 (KRR) form an essential for transport from endoplasmic reticulum to Golgi apparatus and interaction with SAR1A region. A helical; Signal-anchor for type II membrane protein transmembrane segment spans residues 7–27 (ILAIVLIVLPWTLLVTVWHQS). Over 28 to 335 (TIAPLLTTHK…KGFTDPTVEI (308 aa)) the chain is Lumenal. 92–94 (PTY) is a binding site for UDP-alpha-D-glucuronate. Residues Thr-104 and Thr-109 each carry the phosphothreonine modification. UDP-alpha-D-glucuronate is bound at residue Asp-123. An N-linked (GlcNAc...) asparagine glycan is attached at Asn-141. Positions 166 and 171 each coordinate UDP-alpha-D-glucuronate. Residue Asn-185 is glycosylated (N-linked (GlcNAc...) asparagine). 196 to 198 (DDD) is a UDP-alpha-D-glucuronate binding site. Asp-198 is a Mn(2+) binding site. Residues 246–255 (FDPHRPFAID) form an interaction with galactose moiety of substrate glycoprotein region. Glu-285 serves as the catalytic Proton donor/acceptor. N-linked (GlcNAc...) asparagine glycosylation occurs at Asn-304. Position 312 to 314 (312 to 314 (HTR)) interacts with UDP-alpha-D-glucuronate.

This sequence belongs to the glycosyltransferase 43 family. Homodimer. Interacts with SAR1A. Requires Mn(2+) as cofactor. In terms of processing, the soluble form derives from the membrane form by proteolytic processing.

The protein localises to the golgi apparatus membrane. It localises to the secreted. It catalyses the reaction 3-O-(beta-D-galactosyl-(1-&gt;3)-beta-D-galactosyl-(1-&gt;4)-beta-D-xylosyl)-L-seryl-[protein] + UDP-alpha-D-glucuronate = 3-O-(beta-D-GlcA-(1-&gt;3)-beta-D-Gal-(1-&gt;3)-beta-D-Gal-(1-&gt;4)-beta-D-Xyl)-L-seryl-[protein] + UDP + H(+). It participates in protein modification; protein glycosylation. Its function is as follows. Involved in the biosynthesis of L2/HNK-1 carbohydrate epitope on glycoproteins. Can also play a role in glycosaminoglycan biosynthesis. Substrates include asialo-orosomucoid (ASOR), asialo-fetuin, and asialo-neural cell adhesion molecule. Requires sphingomyelin for activity: stearoyl-sphingomyelin was the most effective, followed by palmitoyl-sphingomyelin and lignoceroyl-sphingomyelin. Activity was demonstrated only for sphingomyelin with a saturated fatty acid and not for that with an unsaturated fatty acid, regardless of the length of the acyl group. This chain is Galactosylgalactosylxylosylprotein 3-beta-glucuronosyltransferase 1, found in Canis lupus familiaris (Dog).